The sequence spans 255 residues: Imidazole glycerol phosphate synthase subunit HisF (255 aa).

Active-site residues include Asp11 and Asp130.

Belongs to the HisA/HisF family. As to quaternary structure, heterodimer of HisH and HisF.

The protein localises to the cytoplasm. The catalysed reaction is 5-[(5-phospho-1-deoxy-D-ribulos-1-ylimino)methylamino]-1-(5-phospho-beta-D-ribosyl)imidazole-4-carboxamide + L-glutamine = D-erythro-1-(imidazol-4-yl)glycerol 3-phosphate + 5-amino-1-(5-phospho-beta-D-ribosyl)imidazole-4-carboxamide + L-glutamate + H(+). The protein operates within amino-acid biosynthesis; L-histidine biosynthesis; L-histidine from 5-phospho-alpha-D-ribose 1-diphosphate: step 5/9. Its function is as follows. IGPS catalyzes the conversion of PRFAR and glutamine to IGP, AICAR and glutamate. The HisF subunit catalyzes the cyclization activity that produces IGP and AICAR from PRFAR using the ammonia provided by the HisH subunit. In Akkermansia muciniphila (strain ATCC BAA-835 / DSM 22959 / JCM 33894 / BCRC 81048 / CCUG 64013 / CIP 107961 / Muc), this protein is Imidazole glycerol phosphate synthase subunit HisF.